We begin with the raw amino-acid sequence, 160 residues long: 6,7-dimethyl-8-ribityllumazine synthase (160 aa).

5-amino-6-(D-ribitylamino)uracil-binding positions include Phe22, 57 to 59 (AVE), and 81 to 83 (AVI). 86 to 87 (GT) serves as a coordination point for (2S)-2-hydroxy-3-oxobutyl phosphate. Catalysis depends on His89, which acts as the Proton donor. Phe114 contacts 5-amino-6-(D-ribitylamino)uracil. Arg128 serves as a coordination point for (2S)-2-hydroxy-3-oxobutyl phosphate.

This sequence belongs to the DMRL synthase family. As to quaternary structure, forms an icosahedral capsid composed of 60 subunits, arranged as a dodecamer of pentamers.

It carries out the reaction (2S)-2-hydroxy-3-oxobutyl phosphate + 5-amino-6-(D-ribitylamino)uracil = 6,7-dimethyl-8-(1-D-ribityl)lumazine + phosphate + 2 H2O + H(+). The protein operates within cofactor biosynthesis; riboflavin biosynthesis; riboflavin from 2-hydroxy-3-oxobutyl phosphate and 5-amino-6-(D-ribitylamino)uracil: step 1/2. In terms of biological role, catalyzes the formation of 6,7-dimethyl-8-ribityllumazine by condensation of 5-amino-6-(D-ribitylamino)uracil with 3,4-dihydroxy-2-butanone 4-phosphate. This is the penultimate step in the biosynthesis of riboflavin. In Shewanella sediminis (strain HAW-EB3), this protein is 6,7-dimethyl-8-ribityllumazine synthase.